We begin with the raw amino-acid sequence, 82 residues long: ATP synthase subunit c (82 aa).

A run of 2 helical transmembrane segments spans residues 5–25 (MSLV…FGAI) and 55–75 (FLII…VIAF).

It belongs to the ATPase C chain family. As to quaternary structure, F-type ATPases have 2 components, F(1) - the catalytic core - and F(0) - the membrane proton channel. F(1) has five subunits: alpha(3), beta(3), gamma(1), delta(1), epsilon(1). F(0) has three main subunits: a(1), b(2) and c(10-14). The alpha and beta chains form an alternating ring which encloses part of the gamma chain. F(1) is attached to F(0) by a central stalk formed by the gamma and epsilon chains, while a peripheral stalk is formed by the delta and b chains.

It localises to the cell membrane. F(1)F(0) ATP synthase produces ATP from ADP in the presence of a proton or sodium gradient. F-type ATPases consist of two structural domains, F(1) containing the extramembraneous catalytic core and F(0) containing the membrane proton channel, linked together by a central stalk and a peripheral stalk. During catalysis, ATP synthesis in the catalytic domain of F(1) is coupled via a rotary mechanism of the central stalk subunits to proton translocation. Its function is as follows. Key component of the F(0) channel; it plays a direct role in translocation across the membrane. A homomeric c-ring of between 10-14 subunits forms the central stalk rotor element with the F(1) delta and epsilon subunits. The polypeptide is ATP synthase subunit c (Carboxydothermus hydrogenoformans (strain ATCC BAA-161 / DSM 6008 / Z-2901)).